The primary structure comprises 288 residues: 2-hydroxy-6-oxononadienedioate/2-hydroxy-6-oxononatrienedioate hydrolase (288 aa).

H267 serves as the catalytic Proton acceptor.

The protein belongs to the AB hydrolase superfamily. MhpC family. Homodimer.

It carries out the reaction (2Z,4E)-2-hydroxy-6-oxonona-2,4-dienedioate + H2O = (2Z)-2-hydroxypenta-2,4-dienoate + succinate + H(+). The catalysed reaction is (2Z,4E,7E)-2-hydroxy-6-oxonona-2,4,7-trienedioate + H2O = (2Z)-2-hydroxypenta-2,4-dienoate + fumarate + H(+). Its pathway is aromatic compound metabolism; 3-phenylpropanoate degradation. In terms of biological role, catalyzes the cleavage of the C5-C6 bond of 2-hydroxy-6-oxononadienedioate and 2-hydroxy-6-oxononatrienedioate, a dienol ring fission product of the bacterial meta-cleavage pathway for degradation of phenylpropionic acid. This is 2-hydroxy-6-oxononadienedioate/2-hydroxy-6-oxononatrienedioate hydrolase from Klebsiella pneumoniae subsp. pneumoniae (strain ATCC 700721 / MGH 78578).